Here is a 1863-residue protein sequence, read N- to C-terminus: MIEDKGPRVADYFVVAGLTDVSKPLEEEIHFNDACHKVAKPKEPITDVSVIIKSLGEEVPQDYICIDVTPTGLSADLNNGSLVGPQIYLCYRRGRDKPPLTDLGVLYDWKERLKQGCEIIQSTPYGRPANISGSTSSQRIYITYRRASENMTQNTLAVTDICIIIPSKGESPPHTFCKVDKNLNNSMWGSAVYLCYKKSVAKTNTVSYKAGLICRYPQEDYESFSLPESVPLFCLPMGATIECWPSNSKYPLPVFSTFVLTGASAEKVYGAAIQFYEPYSEENLTEKQRLLLGLTSADGKSDSSKTIHTNKCICLLSHWPFFDAFRKFLTFLYRYSISGPHVLPIEKHISHFMHKVPFPSPQRPRILVQLSPHDNLILSQPVSSPLPLSGGKFSTLLQNLGPENAVTLLVFAVTEHKILIHSLRPSVLTSVTEALVSMIFPFHWPCPYVPLCPLALADVLSAPCPFIVGIDSRYFDLYDPPPDVSCVDVDTNTISQIGDKKNVAWKILPKKPCKNLMNTLNNLHQQLAKLQQRPRDDGLMDLAINDYDFNSGKRLHMIDLEIQEAFLFFMASILKGYRSYLRPITQAPSETATDAASLFALQAFLRSRDRSHQKFYNMMTKTQMFIRFIEECSFVSDKDASLAFFDDCVDKVDMDKSGEVRLIELDESFKSEHTVFVTPPEIPHLPNGEEPPLQYSYNGFPVLRNNLFERPEGFLQAKKNKLPSKSSSPNSPLPMFRRTKQEIKSAHKIAKRYSSIPQMWSRCLLRHCYGLWFICLPAYVKVCHSKVRALKTAYDVLKKMQSKKMDPPDEVCYRILMQLCGQYDQPVLAVRVLFEMQKAGIDPNAITYGYYNKAVLESTWPSRSRSGYFLWTKVRNVVLGVTQFKRALKKHAHLSQTTLSGGQSDLGYNSLSKDEVRRGDTSTEDIQEEKDKKGSDCSSLSESESTKGSADCLPKLSYQNSSSIVRLTGTSNNSAGKISGESMESTPELLLISSLEDTNETRNIQSRCFRKRHKSDNETNLQQQVVWGNRNRNLSGGVLMGFMLNRINQEATPGDIVEKLGADAKILSNVISKSTRPNTLDIGKPPLRSKRDSLEKESSDDDTPFDGSNYLADKVDSPVIFDLEDLDSETDVSKAGCVATQNPKRIQRMNSSFSVKPFEKTDVATGFDPLSLLVAETEQQQKEEEEEDEDDSKSISTPSARRDLAEEIVMYMNNMSSPLTSRTPSIDLQRACDDKLNKKSPPLVKACRRSSLPPNSPKPVRLTKSKSYTKSEEKPRDRLWSSPAFSPTCPFREESQDTLTHSSPSFNLDTLLVPKLDVLRNSMFTAGKGVAEKASKWYSRFTMYTTSSKDQSSDRTSLSSVGAQDSESTSLTDEDVCHELEGPISSQETSATSGTKRIDLSRISLESSASLEGSLSKFALPGKSEVTSSFNASNTNIFQNYAMEVLISSCSRCRTCDCLVHDEEIMAGWTADDSNLNTTCPFCGNIFLPFLNIEIRDLRRPGRYFLKSSPSTENMHFPSSISSQTRQSCISTSASGLDTSALSVQGNFDLNSKSKLQENFCTRSIQIPANRSKTAMSKCPIFPMARSISTSGPLDKEDTGRQKLISTGSLPATLQGATDSLGLEWHLPSPDPVTVPYLSPLVVWKELESLLENEGDHAITVADFVDHHPIVFWNLVWYFRRLDLPSNLPGLILSSEHCNKYSKIPRHCMSEDSKYVLIQMLWDNMKLHQDPGQPLYILWNAHTQKYPMVHLLQKSDNSFNQELLKSMVKSIKMNDVYGPMSQILETLNKCPHFKRQRSLYREILFLSLVALGRENIDIDAFDKEYKMAYDRLTPSQVKSTHNCDRPPSTGVMECRKTFGEPYL.

The MABP domain maps to K42 to V200. The uDENN domain maps to V192 to P364. The 137-residue stretch at P385–N521 folds into the cDENN domain. The dDENN domain occupies L523 to S641. Residue S731 is modified to Phosphoserine. 2 PPR repeats span residues W772–P808 and D809–P843. The interval D905–C952 is disordered. The span at S912–T921 shows a compositional bias: basic and acidic residues. A Bipartite nuclear localization signal motif is present at residues R917 to K933. Over residues D936–S949 the composition is skewed to low complexity. Residues S1015, S1035, S1099, S1151, and S1152 each carry the phosphoserine modification. The interval T1075–L1111 is disordered. A disordered region spans residues T1177–R1202. 3 positions are modified to phosphoserine: S1225, S1240, and S1251. 2 disordered regions span residues N1237–F1306 and S1348–D1375. The segment covering T1269–L1279 has biased composition (basic and acidic residues). At S1281 the chain carries Phosphoserine. Polar residues-rich tracts occupy residues D1297–F1306 and S1348–L1371. Residues S1508, S1587, S1589, and S1591 each carry the phosphoserine modification.

As to expression, expressed ubiquitously. Highest expression in bone marrow, medium in peripheral blood lymphocytes and lowest in spleen. In brain, breast, and prostate, higher expression was seen in normal cells than in tumor cells. Expression is regulated in a growth- and cell cycle-dependent manner.

The protein resides in the nucleus. Functionally, probable guanine nucleotide exchange factor (GEF) which may activate RAB10. Promotes the exchange of GDP to GTP, converting inactive GDP-bound Rab proteins into their active GTP-bound form. According to PubMed:8056341, it may bind to ISRE-like element (interferon-stimulated response element) of MYC P2 promoter. The sequence is that of C-myc promoter-binding protein (DENND4A) from Homo sapiens (Human).